A 266-amino-acid chain; its full sequence is Trypsin Blo t 3 (266 aa).

An N-terminal signal peptide occupies residues 1–15 (MKVLVLFCLVSLAAA). The propeptide occupies 16-35 (GPLKDALNKAQVDAFYAEGY). Residues 36-260 (IVDGSNAADG…RVGNYISWIK (225 aa)) form the Peptidase S1 domain. Cys-60 and Cys-76 are joined by a disulfide. Active-site charge relay system residues include His-75 and Asp-120. 2 cysteine pairs are disulfide-bonded: Cys-187-Cys-204 and Cys-216-Cys-240. Ser-220 serves as the catalytic Charge relay system.

The protein belongs to the peptidase S1 family.

It localises to the secreted. It carries out the reaction Preferential cleavage: Arg-|-Xaa, Lys-|-Xaa.. The polypeptide is Trypsin Blo t 3 (Blomia tropicalis (Mite)).